Consider the following 347-residue polypeptide: DNA-directed RNA polymerase subunit alpha (347 aa).

An alpha N-terminal domain (alpha-NTD) region spans residues 1–226 (MLISQRPTLS…ELFGLARELN (226 aa)). Residues 243-347 (HIASFALPID…EQDYAETEQL (105 aa)) form an alpha C-terminal domain (alpha-CTD) region.

It belongs to the RNA polymerase alpha chain family. Homodimer. The RNAP catalytic core consists of 2 alpha, 1 beta, 1 beta' and 1 omega subunit. When a sigma factor is associated with the core the holoenzyme is formed, which can initiate transcription.

The catalysed reaction is RNA(n) + a ribonucleoside 5'-triphosphate = RNA(n+1) + diphosphate. In terms of biological role, DNA-dependent RNA polymerase catalyzes the transcription of DNA into RNA using the four ribonucleoside triphosphates as substrates. This chain is DNA-directed RNA polymerase subunit alpha, found in Mycobacterium bovis (strain ATCC BAA-935 / AF2122/97).